Reading from the N-terminus, the 156-residue chain is Ribosomal RNA large subunit methyltransferase H (156 aa).

Residues L73, G104, and 123–128 contribute to the S-adenosyl-L-methionine site; that span reads ISSMTL.

Belongs to the RNA methyltransferase RlmH family. In terms of assembly, homodimer.

It localises to the cytoplasm. It carries out the reaction pseudouridine(1915) in 23S rRNA + S-adenosyl-L-methionine = N(3)-methylpseudouridine(1915) in 23S rRNA + S-adenosyl-L-homocysteine + H(+). Its function is as follows. Specifically methylates the pseudouridine at position 1915 (m3Psi1915) in 23S rRNA. In Burkholderia lata (strain ATCC 17760 / DSM 23089 / LMG 22485 / NCIMB 9086 / R18194 / 383), this protein is Ribosomal RNA large subunit methyltransferase H.